We begin with the raw amino-acid sequence, 360 residues long: Magnesium-protoporphyrin IX monomethyl ester [oxidative] cyclase (360 aa).

The protein belongs to the AcsF family. Requires Fe cation as cofactor.

It catalyses the reaction Mg-protoporphyrin IX 13-monomethyl ester + 3 NADPH + 3 O2 + 2 H(+) = 3,8-divinyl protochlorophyllide a + 3 NADP(+) + 5 H2O. It functions in the pathway porphyrin-containing compound metabolism; chlorophyll biosynthesis (light-independent). In terms of biological role, catalyzes the formation of the isocyclic ring in chlorophyll biosynthesis. Mediates the cyclase reaction, which results in the formation of divinylprotochlorophyllide (Pchlide) characteristic of all chlorophylls from magnesium-protoporphyrin IX 13-monomethyl ester (MgPMME). This Synechococcus sp. (strain WH7803) protein is Magnesium-protoporphyrin IX monomethyl ester [oxidative] cyclase.